The following is a 122-amino-acid chain: UPF0382 membrane protein SAB0533 (122 aa).

The next 4 helical transmembrane spans lie at 3–23, 46–66, 69–89, and 98–118; these read LFII…AFGA, MYHG…SINV, AGWL…ILVL, and ITPI…IATF.

This sequence belongs to the UPF0382 family.

The protein localises to the cell membrane. The protein is UPF0382 membrane protein SAB0533 of Staphylococcus aureus (strain bovine RF122 / ET3-1).